The chain runs to 217 residues: Dihydroflavonol 4-reductase (217 aa).

NADP(+) contacts are provided by lysine 27 and tyrosine 146.

Belongs to the NAD(P)-dependent epimerase/dehydratase family. Dihydroflavonol-4-reductase subfamily.

It catalyses the reaction a (2R,3S,4S)-leucoanthocyanidin + NADP(+) = a (2R,3R)-dihydroflavonol + NADPH + H(+). It carries out the reaction (2S)-flavan-4-ol + NADP(+) = (2S)-flavanone + NADPH + H(+). The protein operates within pigment biosynthesis; anthocyanin biosynthesis. Its function is as follows. Bifunctional enzyme involved in flavonoid metabolism. This chain is Dihydroflavonol 4-reductase (DFR1), found in Medicago sativa (Alfalfa).